Consider the following 202-residue polypeptide: Small ribosomal subunit protein uS4 (202 aa).

Residues 15–43 form a disordered region; it reads LGDLPGLTRKAAKRSNPPGQHGNARRKRS. Residues 90-152 form the S4 RNA-binding domain; the sequence is GRLDNVCFRL…KGSKKLAEGN (63 aa).

Belongs to the universal ribosomal protein uS4 family. Part of the 30S ribosomal subunit. Contacts protein S5. The interaction surface between S4 and S5 is involved in control of translational fidelity.

In terms of biological role, one of the primary rRNA binding proteins, it binds directly to 16S rRNA where it nucleates assembly of the body of the 30S subunit. With S5 and S12 plays an important role in translational accuracy. This is Small ribosomal subunit protein uS4 from Prochlorococcus marinus (strain SARG / CCMP1375 / SS120).